Reading from the N-terminus, the 305-residue chain is Putative F-box protein PP2-B8 (305 aa).

Positions 33–79 (VAELDDLPEECVSIIVSFTSPQDACVLASVSKTFASAVKSDIVWEKF) constitute an F-box domain.

This chain is Putative F-box protein PP2-B8 (PP2B8), found in Arabidopsis thaliana (Mouse-ear cress).